The sequence spans 90 residues: Small ribosomal subunit protein uS17 (90 aa).

It belongs to the universal ribosomal protein uS17 family. Part of the 30S ribosomal subunit.

In terms of biological role, one of the primary rRNA binding proteins, it binds specifically to the 5'-end of 16S ribosomal RNA. The chain is Small ribosomal subunit protein uS17 from Methylobacillus flagellatus (strain ATCC 51484 / DSM 6875 / VKM B-1610 / KT).